The chain runs to 127 residues: MRDSLLVFCGAGLGGLLRHGLNQVSLRLALFGFPWMTCFINISGSLAMGLLVGYLAGHGDSRFPQSLRLFLATGVLGGYTTFSTFSLENALLIERGAVGLAVLYSLVSVGLGLGGLFLGLTLTRSLS.

The next 3 membrane-spanning stretches (helical) occupy residues 28-48 (LALF…SLAM), 73-93 (TGVL…ALLI), and 98-118 (VGLA…GLFL). 2 residues coordinate Na(+): G77 and T80.

It belongs to the fluoride channel Fluc/FEX (TC 1.A.43) family.

The protein localises to the cell inner membrane. It carries out the reaction fluoride(in) = fluoride(out). Na(+) is not transported, but it plays an essential structural role and its presence is essential for fluoride channel function. Its function is as follows. Fluoride-specific ion channel. Important for reducing fluoride concentration in the cell, thus reducing its toxicity. The protein is Fluoride-specific ion channel FluC of Beijerinckia indica subsp. indica (strain ATCC 9039 / DSM 1715 / NCIMB 8712).